The following is a 308-amino-acid chain: Small ribosomal subunit protein uS5c (308 aa).

Residues 1-55 (MATTATTTPSATSLTTLHRRIPLFPTTTTLLSLSSSSKPLFLSLSSTRSFPTHLY) constitute a chloroplast transit peptide. One can recognise an S5 DRBM domain in the interval 152–215 (FEENVVQVRR…VDARRNIITV (64 aa)).

As to quaternary structure, component of the chloroplast small ribosomal subunit (SSU). Mature 70S chloroplast ribosomes of higher plants consist of a small (30S) and a large (50S) subunit. The 30S small subunit contains 1 molecule of ribosomal RNA (16S rRNA) and 24 different proteins. The 50S large subunit contains 3 rRNA molecules (23S, 5S and 4.5S rRNA) and 33 different proteins. uS5c binds directly to 16S ribosomal RNA.

It localises to the plastid. The protein localises to the chloroplast. Component of the chloroplast ribosome (chloro-ribosome), a dedicated translation machinery responsible for the synthesis of chloroplast genome-encoded proteins, including proteins of the transcription and translation machinery and components of the photosynthetic apparatus. The sequence is that of Small ribosomal subunit protein uS5c (rps5) from Spinacia oleracea (Spinach).